Consider the following 1191-residue polypeptide: Putative glycoside hydrolase 22789 (1191 aa).

Low complexity predominate over residues 173-187 (PSSSGASSVLPSPSA). The disordered stretch occupies residues 173–221 (PSSSGASSVLPSPSAHTPDAATDANHLPNPDPASGRQELTRAGRPARKK).

It belongs to the glycoside hydrolase-like 3 (GHL3) family.

The sequence is that of Putative glycoside hydrolase 22789 from Monosiga brevicollis (Choanoflagellate).